The primary structure comprises 88 residues: Apolipoprotein C-I (88 aa).

The N-terminal stretch at 1–26 is a signal peptide; that stretch reads MRLFIALPVLIVVVAMTLEGPAPAQA.

This sequence belongs to the apolipoprotein C1 family. In terms of tissue distribution, adult and fetal liver.

It localises to the secreted. Functionally, inhibitor of lipoprotein binding to the low density lipoprotein (LDL) receptor, LDL receptor-related protein, and very low density lipoprotein (VLDL) receptor. Associates with high density lipoproteins (HDL) and the triacylglycerol-rich lipoproteins in the plasma and makes up about 10% of the protein of the VLDL and 2% of that of HDL. Appears to interfere directly with fatty acid uptake and is also the major plasma inhibitor of cholesteryl ester transfer protein (CETP). Modulates the interaction of APOE with beta-migrating VLDL and inhibits binding of beta-VLDL to the LDL receptor-related protein. Binds free fatty acids and reduces their intracellular esterification. The protein is Apolipoprotein C-I (Apoc1) of Mus musculus (Mouse).